Reading from the N-terminus, the 144-residue chain is Large ribosomal subunit protein uL15 (144 aa).

The interval 1-45 is disordered; it reads MNLNTLSPDPGSRPSRRRVGRGIGSGLGKTCGKGHKGQKSRAGGY. A compositionally biased stretch (gly residues) spans 21–31; sequence RGIGSGLGKTC.

It belongs to the universal ribosomal protein uL15 family. Part of the 50S ribosomal subunit.

In terms of biological role, binds to the 23S rRNA. This chain is Large ribosomal subunit protein uL15, found in Legionella pneumophila (strain Paris).